The primary structure comprises 76 residues: Exodeoxyribonuclease 7 small subunit (76 aa).

Belongs to the XseB family. As to quaternary structure, heterooligomer composed of large and small subunits.

The protein resides in the cytoplasm. It carries out the reaction Exonucleolytic cleavage in either 5'- to 3'- or 3'- to 5'-direction to yield nucleoside 5'-phosphates.. Bidirectionally degrades single-stranded DNA into large acid-insoluble oligonucleotides, which are then degraded further into small acid-soluble oligonucleotides. In Bacillus mycoides (strain KBAB4) (Bacillus weihenstephanensis), this protein is Exodeoxyribonuclease 7 small subunit.